Here is a 353-residue protein sequence, read N- to C-terminus: Photosystem II protein D1 (353 aa).

T2 bears the N-acetylthreonine mark. Phosphothreonine is present on T2. The next 3 membrane-spanning stretches (helical) occupy residues 29–46, 118–133, and 142–156; these read YIGWFGVLMIPTLLTATS, HFLLGVACYMGREWEL, and WIAVAYSAPVAAATA. H118 serves as a coordination point for chlorophyll a. Position 126 (Y126) interacts with pheophytin a. 2 residues coordinate [CaMn4O5] cluster: D170 and E189. A helical transmembrane segment spans residues 197 to 218; sequence FHMLGVAGVFGGSLFSAMHGSL. Residue H198 participates in chlorophyll a binding. A quinone-binding positions include H215 and 264-265; that span reads SF. H215 is a binding site for Fe cation. A Fe cation-binding site is contributed by H272. Residues 274-288 traverse the membrane as a helical segment; sequence FLAAWPVVGIWFTAL. [CaMn4O5] cluster-binding residues include H332, E333, D342, and A344. Residues 345-353 constitute a propeptide that is removed on maturation; sequence AVEAPSTNG.

It belongs to the reaction center PufL/M/PsbA/D family. As to quaternary structure, PSII is composed of 1 copy each of membrane proteins PsbA, PsbB, PsbC, PsbD, PsbE, PsbF, PsbH, PsbI, PsbJ, PsbK, PsbL, PsbM, PsbT, PsbX, PsbY, PsbZ, Psb30/Ycf12, at least 3 peripheral proteins of the oxygen-evolving complex and a large number of cofactors. It forms dimeric complexes. The cofactor is The D1/D2 heterodimer binds P680, chlorophylls that are the primary electron donor of PSII, and subsequent electron acceptors. It shares a non-heme iron and each subunit binds pheophytin, quinone, additional chlorophylls, carotenoids and lipids. D1 provides most of the ligands for the Mn4-Ca-O5 cluster of the oxygen-evolving complex (OEC). There is also a Cl(-1) ion associated with D1 and D2, which is required for oxygen evolution. The PSII complex binds additional chlorophylls, carotenoids and specific lipids.. Tyr-161 forms a radical intermediate that is referred to as redox-active TyrZ, YZ or Y-Z. Post-translationally, C-terminally processed by CTPA; processing is essential to allow assembly of the oxygen-evolving complex and thus photosynthetic growth.

The protein resides in the plastid. It localises to the chloroplast thylakoid membrane. It carries out the reaction 2 a plastoquinone + 4 hnu + 2 H2O = 2 a plastoquinol + O2. Photosystem II (PSII) is a light-driven water:plastoquinone oxidoreductase that uses light energy to abstract electrons from H(2)O, generating O(2) and a proton gradient subsequently used for ATP formation. It consists of a core antenna complex that captures photons, and an electron transfer chain that converts photonic excitation into a charge separation. The D1/D2 (PsbA/PsbD) reaction center heterodimer binds P680, the primary electron donor of PSII as well as several subsequent electron acceptors. This chain is Photosystem II protein D1, found in Oenothera parviflora (Small-flowered evening primrose).